A 93-amino-acid polypeptide reads, in one-letter code: Large ribosomal subunit protein uL23cz/uL23cy (93 aa).

It belongs to the universal ribosomal protein uL23 family. In terms of assembly, part of the 50S ribosomal subunit.

The protein localises to the plastid. It localises to the chloroplast. Its function is as follows. Binds to 23S rRNA. The chain is Large ribosomal subunit protein uL23cz/uL23cy (rpl23-A) from Nymphaea alba (White water-lily).